A 101-amino-acid polypeptide reads, in one-letter code: Signal recognition particle 19 kDa protein (101 aa).

The protein belongs to the SRP19 family. In terms of assembly, part of the signal recognition particle protein translocation system, which is composed of SRP and FtsY. Archaeal SRP consists of a 7S RNA molecule of 300 nucleotides and two protein subunits: SRP54 and SRP19.

Its subcellular location is the cytoplasm. Its function is as follows. Involved in targeting and insertion of nascent membrane proteins into the cytoplasmic membrane. Binds directly to 7S RNA and mediates binding of the 54 kDa subunit of the SRP. The sequence is that of Signal recognition particle 19 kDa protein from Methanosarcina acetivorans (strain ATCC 35395 / DSM 2834 / JCM 12185 / C2A).